A 438-amino-acid polypeptide reads, in one-letter code: Na(+)/H(+) antiporter NhaA (438 aa).

11 helical membrane passes run 23–43, 62–82, 104–124, 133–153, 162–182, 185–205, 221–241, 302–322, 337–357, 372–392, and 410–430; these read FGGI…NSFL, FFIG…LFFL, SFPV…YFFL, GFGI…MLLG, VFLI…IALF, TNLK…LAVL, VLLW…AVIL, FLAP…NAGV, LGVI…ITFI, WWHI…SMFI, and IAIL…LFAL.

It belongs to the NhaA Na(+)/H(+) (TC 2.A.33) antiporter family.

It localises to the cell inner membrane. The catalysed reaction is Na(+)(in) + 2 H(+)(out) = Na(+)(out) + 2 H(+)(in). In terms of biological role, na(+)/H(+) antiporter that extrudes sodium in exchange for external protons. In Helicobacter pylori (strain ATCC 700392 / 26695) (Campylobacter pylori), this protein is Na(+)/H(+) antiporter NhaA.